A 148-amino-acid polypeptide reads, in one-letter code: Aspartate carbamoyltransferase regulatory chain (148 aa).

C106, C111, C134, and C137 together coordinate Zn(2+).

This sequence belongs to the PyrI family. Contains catalytic and regulatory chains. Zn(2+) is required as a cofactor.

Its function is as follows. Involved in allosteric regulation of aspartate carbamoyltransferase. The polypeptide is Aspartate carbamoyltransferase regulatory chain (Methanococcus maripaludis (strain C5 / ATCC BAA-1333)).